The following is a 476-amino-acid chain: Bifunctional protein HldE (476 aa).

The tract at residues 1–318 (MAQYSAEFKQ…ENAIHARPET (318 aa)) is ribokinase. Residue 195 to 198 (NMSE) coordinates ATP. Aspartate 264 is an active-site residue. Positions 344–476 (MTNGCFDILH…VIEKIKLLKD (133 aa)) are cytidylyltransferase.

This sequence in the N-terminal section; belongs to the carbohydrate kinase PfkB family. It in the C-terminal section; belongs to the cytidylyltransferase family. In terms of assembly, homodimer.

The enzyme catalyses D-glycero-beta-D-manno-heptose 7-phosphate + ATP = D-glycero-beta-D-manno-heptose 1,7-bisphosphate + ADP + H(+). It catalyses the reaction D-glycero-beta-D-manno-heptose 1-phosphate + ATP + H(+) = ADP-D-glycero-beta-D-manno-heptose + diphosphate. Its pathway is nucleotide-sugar biosynthesis; ADP-L-glycero-beta-D-manno-heptose biosynthesis; ADP-L-glycero-beta-D-manno-heptose from D-glycero-beta-D-manno-heptose 7-phosphate: step 1/4. It participates in nucleotide-sugar biosynthesis; ADP-L-glycero-beta-D-manno-heptose biosynthesis; ADP-L-glycero-beta-D-manno-heptose from D-glycero-beta-D-manno-heptose 7-phosphate: step 3/4. In terms of biological role, catalyzes the phosphorylation of D-glycero-D-manno-heptose 7-phosphate at the C-1 position to selectively form D-glycero-beta-D-manno-heptose-1,7-bisphosphate. Its function is as follows. Catalyzes the ADP transfer from ATP to D-glycero-beta-D-manno-heptose 1-phosphate, yielding ADP-D-glycero-beta-D-manno-heptose. This is Bifunctional protein HldE from Haemophilus influenzae (strain 86-028NP).